The primary structure comprises 337 residues: Calcium-binding protein 39-like (337 aa).

The protein belongs to the Mo25 family. Component of a trimeric complex composed of STK11/LKB1, STRAD (STRADA or STRADB) and CAB39/MO25 (CAB39/MO25alpha or CAB39L/MO25beta): the complex tethers STK11/LKB1 in the cytoplasm and stimulates its catalytic activity.

Its function is as follows. Component of a complex that binds and activates STK11/LKB1. In the complex, required to stabilize the interaction between CAB39/MO25 (CAB39/MO25alpha or CAB39L/MO25beta) and STK11/LKB1. This chain is Calcium-binding protein 39-like (Cab39l), found in Mus musculus (Mouse).